We begin with the raw amino-acid sequence, 790 residues long: Eukaryotic translation initiation factor 3 subunit C (790 aa).

Residues 1–62 (MSRFFVSGYN…DGRPSGPAYF (62 aa)) are disordered. Residues 14-53 (SSEEEDLLSSEEELLTSSGEENEDSDFFNDDDESSSDEED) are compositionally biased toward acidic residues. In terms of domain architecture, PCI spans 556–728 (FHQHINLELL…IVFTTDSQRS (173 aa)). Positions 748–790 (NEKTSSNGYAKKNQSQTQPQAQSKEVEENKFRYANVNTNTDEF) are disordered. Positions 751–770 (TSSNGYAKKNQSQTQPQAQS) are enriched in polar residues.

This sequence belongs to the eIF-3 subunit C family. In terms of assembly, component of the eukaryotic translation initiation factor 3 (eIF-3) complex.

The protein localises to the cytoplasm. In terms of biological role, component of the eukaryotic translation initiation factor 3 (eIF-3) complex, which is involved in protein synthesis of a specialized repertoire of mRNAs and, together with other initiation factors, stimulates binding of mRNA and methionyl-tRNAi to the 40S ribosome. The eIF-3 complex specifically targets and initiates translation of a subset of mRNAs involved in cell proliferation. In Lodderomyces elongisporus (strain ATCC 11503 / CBS 2605 / JCM 1781 / NBRC 1676 / NRRL YB-4239) (Yeast), this protein is Eukaryotic translation initiation factor 3 subunit C.